We begin with the raw amino-acid sequence, 151 residues long: Putative pre-16S rRNA nuclease (151 aa).

This sequence belongs to the YqgF nuclease family.

It localises to the cytoplasm. Functionally, could be a nuclease involved in processing of the 5'-end of pre-16S rRNA. The sequence is that of Putative pre-16S rRNA nuclease from Onion yellows phytoplasma (strain OY-M).